The chain runs to 752 residues: Complement C2 (752 aa).

Positions 1–20 (MGPLMVLFCLLFLYPGLADS) are cleaved as a signal peptide. Sushi domains lie at 22-86 (PSCP…VCKP), 87-146 (VRCP…VCDN), and 149-206 (GHCP…ICRQ). Intrachain disulfides connect Cys-24-Cys-64, Cys-51-Cys-84, Cys-89-Cys-131, Cys-117-Cys-144, Cys-151-Cys-191, and Cys-177-Cys-204. Asn-29 is a glycosylation site (N-linked (GlcNAc...) asparagine). Asn-112 carries N-linked (GlcNAc...) asparagine glycosylation. A VWFA domain is found at 254 to 452 (NLYLLLDCSQ…KALHQVFEHM (199 aa)). Positions 260-264 (DCSQS) match the MIDAS-like motif motif. Mg(2+) contacts are provided by Ser-262 and Ser-264. Residues Asn-290 and Asn-333 are each glycosylated (N-linked (GlcNAc...) asparagine). Thr-337 contributes to the Mg(2+) binding site. Intrachain disulfides connect Cys-463–Cys-581, Cys-492–Cys-508, and Cys-584–Cys-600. The region spanning 464–744 (GVGNMSANAS…MQPWLRQHLG (281 aa)) is the Peptidase S1 domain. N-linked (GlcNAc...) asparagine glycosylation is found at Asn-467 and Asn-471. Residues His-507 and Asp-561 each act as charge relay system in the active site. Residues Asn-621 and Asn-651 are each glycosylated (N-linked (GlcNAc...) asparagine). 2 disulfides stabilise this stretch: Cys-638–Cys-665 and Cys-675–Cys-705. Ser-679 (charge relay system) is an active-site residue.

Belongs to the peptidase S1 family. As to quaternary structure, serine protease component of the C3 convertase, also named C4bC2b, composed of the serine protease complement C2b and complement C4b. Serine protease component of the C5 convertase, also named C4bC2bC3b, composed of the serine protease complement C2b, complement C3b, as well as complement C4b. It depends on Mg(2+) as a cofactor. The cofactor is Mn(2+). Cleaved and activated by different proteases depending on the complement pathway to generate complement C2a and serine protease complement C2b chains. Cleaved and activated by C1S following activation by the classical complement system. Cleaved and activated by MASP2 following activation by the lectin complement system. Cleaved and activated by GZMK following activation by the GZMK complement system.

It is found in the secreted. It localises to the cell surface. It carries out the reaction Selective cleavage of Arg-|-Ser bond in complement component C3 alpha-chain to form C3a and C3b, and Arg-|-Xaa bond in complement component C5 alpha-chain to form C5a and C5b.. Precursor of the catalytic component of the C3 and C5 convertase complexes, which are part of the complement pathway, a cascade of proteins that leads to phagocytosis and breakdown of pathogens and signaling that strengthens the adaptive immune system. Component C2 is part of the classical, lectin and GZMK complement systems. Its function is as follows. Catalytic component of the complement C3 and C5 convertase complexes. Following complement activation, recruited to the surface of pathogens by complement C4b opsonin to form the C3 convertase, or C3b and C4b opsonins to form the C5 convertase. As part of the C3 convertase, cleaves and activate C3 into C3a anaphylatoxin and C3b opsonin, the next components of the complement pathways. As part of the C5 convertase, cleaves and activate C5 into C5a anaphylatoxin and C5b component of the membrane attack complex. This is Complement C2 from Pan troglodytes (Chimpanzee).